The primary structure comprises 198 residues: dITP/XTP pyrophosphatase (198 aa).

A substrate-binding site is contributed by 7–12 (TRNAGK). Mg(2+) contacts are provided by Glu-40 and Asp-69. The active-site Proton acceptor is the Asp-69. Substrate is bound by residues Ser-70, 152–155 (FGYD), Lys-175, and 180–181 (HR).

The protein belongs to the HAM1 NTPase family. In terms of assembly, homodimer. Mg(2+) is required as a cofactor.

It catalyses the reaction XTP + H2O = XMP + diphosphate + H(+). The enzyme catalyses dITP + H2O = dIMP + diphosphate + H(+). The catalysed reaction is ITP + H2O = IMP + diphosphate + H(+). Pyrophosphatase that catalyzes the hydrolysis of nucleoside triphosphates to their monophosphate derivatives, with a high preference for the non-canonical purine nucleotides XTP (xanthosine triphosphate), dITP (deoxyinosine triphosphate) and ITP. Seems to function as a house-cleaning enzyme that removes non-canonical purine nucleotides from the nucleotide pool, thus preventing their incorporation into DNA/RNA and avoiding chromosomal lesions. This chain is dITP/XTP pyrophosphatase, found in Exiguobacterium sibiricum (strain DSM 17290 / CCUG 55495 / CIP 109462 / JCM 13490 / 255-15).